A 522-amino-acid polypeptide reads, in one-letter code: Probable protein kinase UbiB (522 aa).

Positions 119–497 (SFERVPVASA…QRRTNRLLQS (379 aa)) constitute a Protein kinase domain. ATP is bound by residues 125–133 (VASASIAQV) and Lys151. The Proton acceptor role is filled by Asp286. A helical transmembrane segment spans residues 496–516 (QSIIYGGMGFVLGLLALQFLI).

This sequence belongs to the ABC1 family. UbiB subfamily.

It localises to the cell inner membrane. It participates in cofactor biosynthesis; ubiquinone biosynthesis [regulation]. In terms of biological role, is probably a protein kinase regulator of UbiI activity which is involved in aerobic coenzyme Q (ubiquinone) biosynthesis. The polypeptide is Probable protein kinase UbiB (Paracidovorax citrulli (strain AAC00-1) (Acidovorax citrulli)).